A 535-amino-acid polypeptide reads, in one-letter code: Heat shock factor protein 2 (535 aa).

Glycyl lysine isopeptide (Lys-Gly) (interchain with G-Cter in SUMO2) cross-links involve residues Lys-2, Lys-82, Lys-135, Lys-139, Lys-151, Lys-210, Lys-218, and Lys-237. Residues Val-7 to Ser-112 mediate DNA binding. A hydrophobic repeat HR-A/B region spans residues Asn-119 to Val-192. The interval Gln-298–Ala-325 is disordered. Over residues Gly-313 to Ala-325 the composition is skewed to low complexity. The hydrophobic repeat HR-C stretch occupies residues Leu-359–Ile-384. Residues Thr-418–Pro-437 are disordered. Basic and acidic residues predominate over residues Val-426–Pro-437.

This sequence belongs to the HSF family. In terms of assembly, DNA-binding homotrimer in stressed or heat shocked cells, otherwise found as a homodimer. Isoform alpha is expressed predominantly in testis while isoform beta is expressed predominantly in heart and brain.

It is found in the cytoplasm. The protein localises to the nucleus. Its function is as follows. DNA-binding protein that specifically binds heat shock promoter elements (HSE) and activates transcription. In higher eukaryotes, HSF is unable to bind to the HSE unless the cells are heat shocked. HSF2 is expressed in a form that binds DNA constitutively but loses DNA binding by incubation at greater than 41 degrees C. The protein is Heat shock factor protein 2 (Hsf2) of Mus musculus (Mouse).